We begin with the raw amino-acid sequence, 319 residues long: D-alanine--D-alanine ligase (319 aa).

Residues 120 to 315 (KRVLAQAGVP…YPELLRRLVE (196 aa)) form the ATP-grasp domain. Residue 147–198 (DPPFFVKPANTGSSVGISRVERFQDLEAALALAFRYDEKAVVEKALSPVREL) participates in ATP binding. Residues aspartate 270, glutamate 282, and asparagine 284 each contribute to the Mg(2+) site.

Belongs to the D-alanine--D-alanine ligase family. It depends on Mg(2+) as a cofactor. Mn(2+) is required as a cofactor.

It is found in the cytoplasm. The catalysed reaction is 2 D-alanine + ATP = D-alanyl-D-alanine + ADP + phosphate + H(+). The protein operates within cell wall biogenesis; peptidoglycan biosynthesis. Functionally, cell wall formation. This Thermus thermophilus (strain ATCC BAA-163 / DSM 7039 / HB27) protein is D-alanine--D-alanine ligase.